Reading from the N-terminus, the 374-residue chain is Flagellar P-ring protein (374 aa).

Residues 1–29 (MRRVRTTRLFQVACAAIVALASSAMSAHA) form the signal peptide.

It belongs to the FlgI family. As to quaternary structure, the basal body constitutes a major portion of the flagellar organelle and consists of four rings (L,P,S, and M) mounted on a central rod.

The protein localises to the periplasm. The protein resides in the bacterial flagellum basal body. Assembles around the rod to form the L-ring and probably protects the motor/basal body from shearing forces during rotation. In Bradyrhizobium sp. (strain BTAi1 / ATCC BAA-1182), this protein is Flagellar P-ring protein.